The chain runs to 119 residues: Ribosome-binding factor A (119 aa).

The protein belongs to the RbfA family. As to quaternary structure, monomer. Binds 30S ribosomal subunits, but not 50S ribosomal subunits or 70S ribosomes.

The protein localises to the cytoplasm. Functionally, one of several proteins that assist in the late maturation steps of the functional core of the 30S ribosomal subunit. Associates with free 30S ribosomal subunits (but not with 30S subunits that are part of 70S ribosomes or polysomes). Required for efficient processing of 16S rRNA. May interact with the 5'-terminal helix region of 16S rRNA. The polypeptide is Ribosome-binding factor A (Buchnera aphidicola subsp. Baizongia pistaciae (strain Bp)).